A 204-amino-acid chain; its full sequence is Urease accessory protein UreG (204 aa).

GTP is bound at residue 15–22 (GPVGSGKT).

Belongs to the SIMIBI class G3E GTPase family. UreG subfamily. Homodimer. UreD, UreF and UreG form a complex that acts as a GTP-hydrolysis-dependent molecular chaperone, activating the urease apoprotein by helping to assemble the nickel containing metallocenter of UreC. The UreE protein probably delivers the nickel.

The protein localises to the cytoplasm. Its function is as follows. Facilitates the functional incorporation of the urease nickel metallocenter. This process requires GTP hydrolysis, probably effectuated by UreG. The protein is Urease accessory protein UreG of Methylobacterium nodulans (strain LMG 21967 / CNCM I-2342 / ORS 2060).